A 273-amino-acid polypeptide reads, in one-letter code: MENCLPRSLEKLQQILQISLEDLPFGCIFCGKLLGAAEKQLFKCTGLCIVWHKGWPYGTCRDCTVLSCALDLYCHLALTAPALEAEALVGQEISSWFMRCTVCGRRLTIPEKIELRARNCTLCCIDKGQYFQWRGHCSSCKLSDQGDLGGYPPSPGSRCGECDECCVPDLTHLTPVDLEELGLYPGPEGTYPDLVDLGPGVFGEEDEEGGGLFDSFEEEDPGPNQCGCFFCTSYPSGTGDTDINQGPAGAAGIALQSDPVCFCENCINFTEFR.

Zinc fingers lie at residues 27–63 and 100–140; these read CIFC…CRDC and CTVC…CSSC.

The protein belongs to the papillomaviridae E6 protein family. In terms of assembly, forms homodimers. Interacts with ubiquitin-protein ligase UBE3A/E6-AP; this interaction stimulates UBE3A ubiquitin activity. Interacts with host BAK1.

It localises to the host cytoplasm. Its subcellular location is the host nucleus. Plays a major role in the induction and maintenance of cellular transformation. E6 associates with host UBE3A/E6-AP ubiquitin-protein ligase and modulates its activity. Protects host keratinocytes from apoptosis by mediating the degradation of host BAK1. May also inhibit host immune response. This chain is Protein E6, found in Sylvilagus floridanus (Cottontail rabbit).